Consider the following 199-residue polypeptide: Large ribosomal subunit protein uL13A (199 aa).

Ser-2 carries the post-translational modification N-acetylserine. Lys-177 participates in a covalent cross-link: Glycyl lysine isopeptide (Lys-Gly) (interchain with G-Cter in ubiquitin).

Belongs to the universal ribosomal protein uL13 family. Component of the large ribosomal subunit (LSU). Mature yeast ribosomes consist of a small (40S) and a large (60S) subunit. The 40S small subunit contains 1 molecule of ribosomal RNA (18S rRNA) and 33 different proteins (encoded by 57 genes). The large 60S subunit contains 3 rRNA molecules (25S, 5.8S and 5S rRNA) and 46 different proteins (encoded by 81 genes). In terms of processing, N-terminally acetylated by acetyltransferase NatA.

The protein resides in the cytoplasm. Functionally, component of the ribosome, a large ribonucleoprotein complex responsible for the synthesis of proteins in the cell. The small ribosomal subunit (SSU) binds messenger RNAs (mRNAs) and translates the encoded message by selecting cognate aminoacyl-transfer RNA (tRNA) molecules. The large subunit (LSU) contains the ribosomal catalytic site termed the peptidyl transferase center (PTC), which catalyzes the formation of peptide bonds, thereby polymerizing the amino acids delivered by tRNAs into a polypeptide chain. The nascent polypeptides leave the ribosome through a tunnel in the LSU and interact with protein factors that function in enzymatic processing, targeting, and the membrane insertion of nascent chains at the exit of the ribosomal tunnel. The protein is Large ribosomal subunit protein uL13A of Saccharomyces cerevisiae (strain ATCC 204508 / S288c) (Baker's yeast).